The following is a 260-amino-acid chain: Purine nucleoside phosphorylase XF_0940 (260 aa).

Zn(2+)-binding residues include H79, C120, and H137.

Belongs to the purine nucleoside phosphorylase YfiH/LACC1 family. In terms of assembly, homodimer. Requires Cu(2+) as cofactor. Zn(2+) is required as a cofactor.

It catalyses the reaction adenosine + phosphate = alpha-D-ribose 1-phosphate + adenine. The enzyme catalyses S-methyl-5'-thioadenosine + phosphate = 5-(methylsulfanyl)-alpha-D-ribose 1-phosphate + adenine. The catalysed reaction is inosine + phosphate = alpha-D-ribose 1-phosphate + hypoxanthine. It carries out the reaction adenosine + H2O + H(+) = inosine + NH4(+). Its function is as follows. Purine nucleoside enzyme that catalyzes the phosphorolysis of adenosine and inosine nucleosides, yielding D-ribose 1-phosphate and the respective free bases, adenine and hypoxanthine. Also catalyzes the phosphorolysis of S-methyl-5'-thioadenosine into adenine and S-methyl-5-thio-alpha-D-ribose 1-phosphate. Also has adenosine deaminase activity. This Xylella fastidiosa (strain 9a5c) protein is Purine nucleoside phosphorylase XF_0940.